Here is a 1004-residue protein sequence, read N- to C-terminus: 2-oxoglutarate dehydrogenase E1 component (1004 aa).

This sequence belongs to the alpha-ketoglutarate dehydrogenase family. In terms of assembly, homodimer. Part of the 2-oxoglutarate dehydrogenase (OGDH) complex composed of E1 (2-oxoglutarate dehydrogenase), E2 (dihydrolipoamide succinyltransferase) and E3 (dihydrolipoamide dehydrogenase); the complex contains multiple copies of the three enzymatic components (E1, E2 and E3). Thiamine diphosphate is required as a cofactor.

It catalyses the reaction N(6)-[(R)-lipoyl]-L-lysyl-[protein] + 2-oxoglutarate + H(+) = N(6)-[(R)-S(8)-succinyldihydrolipoyl]-L-lysyl-[protein] + CO2. Its function is as follows. E1 component of the 2-oxoglutarate dehydrogenase (OGDH) complex which catalyzes the decarboxylation of 2-oxoglutarate, the first step in the conversion of 2-oxoglutarate to succinyl-CoA and CO(2). In Brucella ovis (strain ATCC 25840 / 63/290 / NCTC 10512), this protein is 2-oxoglutarate dehydrogenase E1 component.